The sequence spans 318 residues: Trans-prenyltransferase (318 aa).

A helical membrane pass occupies residues 1–21 (MLHLIYISIIVVLIIILISYT). Isopentenyl diphosphate contacts are provided by lysine 85, arginine 88, and histidine 122. Mg(2+) contacts are provided by aspartate 129 and aspartate 135. Dimethylallyl diphosphate is bound at residue arginine 140. Arginine 141 provides a ligand contact to isopentenyl diphosphate. Residues lysine 216, threonine 217, and glutamine 254 each contribute to the dimethylallyl diphosphate site.

The protein belongs to the FPP/GGPP synthase family. Asfivirus trans-prenyltransferase subfamily. Requires Mg(2+) as cofactor.

The protein resides in the host endoplasmic reticulum. The protein localises to the host membrane. It carries out the reaction isopentenyl diphosphate + dimethylallyl diphosphate = (2E)-geranyl diphosphate + diphosphate. The catalysed reaction is isopentenyl diphosphate + (2E)-geranyl diphosphate = (2E,6E)-farnesyl diphosphate + diphosphate. The enzyme catalyses isopentenyl diphosphate + (2E,6E)-farnesyl diphosphate = (2E,6E,10E)-geranylgeranyl diphosphate + diphosphate. It catalyses the reaction isopentenyl diphosphate + (2E,6E,10E)-geranylgeranyl diphosphate = (2E,6E,10E,14E)-geranylfarnesyl diphosphate + diphosphate. It functions in the pathway isoprenoid biosynthesis; farnesyl diphosphate biosynthesis; farnesyl diphosphate from geranyl diphosphate and isopentenyl diphosphate: step 1/1. The protein operates within isoprenoid biosynthesis; geranyl diphosphate biosynthesis; geranyl diphosphate from dimethylallyl diphosphate and isopentenyl diphosphate: step 1/1. Its pathway is isoprenoid biosynthesis; geranylgeranyl diphosphate biosynthesis; geranylgeranyl diphosphate from farnesyl diphosphate and isopentenyl diphosphate: step 1/1. In terms of biological role, trans-prenyltransferase that catalyzes the sequential condensation of isopentenyl diphosphate (IPP) with different allylic diphosphates, such as dimethylallyl diphosphate (DMAPP), geranyl diphosphate (GPP), farnesyl diphosphate (FPP) and geranylgeranyl diphosphate (GGPP), farnesyl diphosphate being the best allylic substrate. This is Trans-prenyltransferase from African swine fever virus (isolate Warthog/Namibia/Wart80/1980) (ASFV).